A 1347-amino-acid polypeptide reads, in one-letter code: Probable serine/threonine-protein kinase DDB_G0288147 (1347 aa).

The segment at 12 to 67 (NHRFEPYTLKHLTICKRCEKEIIGVSNSAQICYSCKNIYHTRCCKEIETKKLELIC) adopts a Phorbol-ester/DAG-type zinc-finger fold. 3 disordered regions span residues 262-316 (PFNE…LNES), 333-402 (SNNS…KSSK), and 463-485 (DNNNNNNNNNNNNNNNSNNNNNN). The span at 271-282 (DSTLSASTYNRR) shows a compositional bias: polar residues. 3 stretches are compositionally biased toward low complexity: residues 286-316 (KNKNSNKNNTSSSSSAPASASSSKHSNLNES), 333-342 (SNNSNNLAAL), and 350-361 (TTTTTTTTTTTT). Composition is skewed to basic residues over residues 366–382 (NNHHHHQHHHQNSKSRK) and 389–402 (NKKKIKSPKNKSSK). A compositionally biased stretch (low complexity) spans 464 to 485 (NNNNNNNNNNNNNNNSNNNNNN). The 256-residue stretch at 599–854 (VKINVEIYDS…EILKVFYSLL (256 aa)) folds into the Protein kinase domain. ATP is bound by residues 605 to 613 (IYDSPLCTV) and Lys-626. Catalysis depends on Asp-724, which acts as the Proton acceptor. Disordered stretches follow at residues 937–1241 (SERK…IVNP) and 1282–1310 (SSDSSNSLSDPESEEYSMPIKRSSSIRSP). Positions 976–986 (IIDDDDDDDDD) are enriched in acidic residues. 2 stretches are compositionally biased toward low complexity: residues 1004–1015 (NINSENKNNNNV) and 1024–1062 (SSNSNNNNNNNNNNNNNNNNNNNNNNNNNNSNNNNNNNN). Composition is skewed to polar residues over residues 1063–1083 (LRQNQFLGNDLNKSQDNNQLM) and 1118–1127 (LSSSQTSEIG). Composition is skewed to low complexity over residues 1128–1241 (DNNT…IVNP) and 1282–1291 (SSDSSNSLSD).

It belongs to the protein kinase superfamily. TKL Ser/Thr protein kinase family.

It carries out the reaction L-seryl-[protein] + ATP = O-phospho-L-seryl-[protein] + ADP + H(+). The catalysed reaction is L-threonyl-[protein] + ATP = O-phospho-L-threonyl-[protein] + ADP + H(+). In Dictyostelium discoideum (Social amoeba), this protein is Probable serine/threonine-protein kinase DDB_G0288147.